A 912-amino-acid chain; its full sequence is DNA ligase 4 (912 aa).

The ATP site is built by Glu-276, Thr-277, Lys-278, Leu-279, Arg-283, Glu-336, Lys-350, Phe-372, Glu-432, Lys-437, Lys-454, and Lys-456. Lys-278 serves as the catalytic N6-AMP-lysine intermediate. Glu-336 is a binding site for Mg(2+). Glu-432 is a binding site for Mg(2+). A required for catalytic activity region spans residues 615–625 (LASKHLYIDEY). BRCT domains lie at 659–748 (KVSS…PAFM) and 809–912 (CKLC…QFLI).

Belongs to the ATP-dependent DNA ligase family. Interacts with XRCC4; the LIG4-XRCC4 subcomplex has a 1:2 stoichiometry. Component of the core long-range non-homologous end joining (NHEJ) complex (also named DNA-PK complex) composed of PRKDC, LIG4, XRCC4, XRCC6/Ku70, XRCC5/Ku86 and NHEJ1/XLF. Additional component of the NHEJ complex includes PAXX. Following autophosphorylation, PRKDC dissociates from DNA, leading to formation of the short-range NHEJ complex, composed of LIG4, XRCC4, XRCC6/Ku70, XRCC5/Ku86 and NHEJ1/XLF. Mg(2+) serves as cofactor.

The protein localises to the nucleus. It carries out the reaction ATP + (deoxyribonucleotide)n-3'-hydroxyl + 5'-phospho-(deoxyribonucleotide)m = (deoxyribonucleotide)n+m + AMP + diphosphate.. Its function is as follows. DNA ligase involved in DNA non-homologous end joining (NHEJ); required for double-strand break (DSB) repair and V(D)J recombination. Catalyzes the NHEJ ligation step of the broken DNA during DSB repair by resealing the DNA breaks after the gap filling is completed. Joins single-strand breaks in a double-stranded polydeoxynucleotide in an ATP-dependent reaction. LIG4 is mechanistically flexible: it can ligate nicks as well as compatible DNA overhangs alone, while in the presence of XRCC4, it can ligate ends with 2-nucleotides (nt) microhomology and 1-nt gaps. Forms a subcomplex with XRCC4; the LIG4-XRCC4 subcomplex is responsible for the NHEJ ligation step and XRCC4 enhances the joining activity of LIG4. In Gallus gallus (Chicken), this protein is DNA ligase 4.